We begin with the raw amino-acid sequence, 227 residues long: 2,3-bisphosphoglycerate-dependent phosphoglycerate mutase (227 aa).

Substrate-binding positions include 8-15, 21-22, arginine 58, 110-113, lysine 121, 137-138, and 181-182; these read RHGQSIWN, TG, ERYY, RR, and GN. Catalysis depends on histidine 9, which acts as the Tele-phosphohistidine intermediate. Glutamate 110 serves as the catalytic Proton donor/acceptor.

Belongs to the phosphoglycerate mutase family. BPG-dependent PGAM subfamily. As to quaternary structure, homodimer.

The enzyme catalyses (2R)-2-phosphoglycerate = (2R)-3-phosphoglycerate. It functions in the pathway carbohydrate degradation; glycolysis; pyruvate from D-glyceraldehyde 3-phosphate: step 3/5. In terms of biological role, catalyzes the interconversion of 2-phosphoglycerate and 3-phosphoglycerate. This chain is 2,3-bisphosphoglycerate-dependent phosphoglycerate mutase, found in Pseudoalteromonas atlantica (strain T6c / ATCC BAA-1087).